A 292-amino-acid chain; its full sequence is Peroxisomal 2,4-dienoyl-CoA reductase [(3E)-enoyl-CoA-producing] (292 aa).

NADP(+) is bound by residues 35 to 40 (GGGSGI), 60 to 64 (RSLPR), and D86. R60 is a binding site for substrate. Substrate-binding positions include R88, F118, and 126–128 (SFN). N6-acetyllysine is present on K151. NADP(+) is bound by residues K182 and 208–214 (PGAISGT). Residue R219 coordinates substrate. S287 carries the post-translational modification Phosphoserine. The Microbody targeting signal signature appears at 290–292 (AKL). An N6-acetyllysine modification is found at K291.

Belongs to the short-chain dehydrogenases/reductases (SDR) family. 2,4-dienoyl-CoA reductase subfamily. As to quaternary structure, monomer, dimer and oligomer.

Its subcellular location is the peroxisome. It carries out the reaction a (2E,4Z)-dienoyl-CoA + NADPH + H(+) = a 4,5-saturated-(3E)-enoyl-CoA + NADP(+). It catalyses the reaction a (2E,4E)-dienoyl-CoA + NADPH + H(+) = a 4,5-saturated-(3E)-enoyl-CoA + NADP(+). The catalysed reaction is (2E,4E)-hexadienoyl-CoA + NADPH + H(+) = (3E)-hexenoyl-CoA + NADP(+). The enzyme catalyses (2E,4E)-decadienoyl-CoA + NADPH + H(+) = (3E)-decenoyl-CoA + NADP(+). It carries out the reaction (2E,4Z,7Z,10Z,13Z,16Z,19Z)-docosaheptaenoyl-CoA + NADPH + H(+) = (3E,7Z,10Z,13Z,16Z,19Z)-docosahexaenoyl-CoA + NADP(+). Functionally, auxiliary enzyme of beta-oxidation. Participates in the degradation of unsaturated fatty enoyl-CoA esters having double bonds in both even- and odd-numbered positions in peroxisome. Catalyzes the NADP-dependent reduction of 2,4-dienoyl-CoA to yield trans-3-enoyl-CoA. Has activity towards short and medium chain 2,4-dienoyl-CoAs, but also towards 2,4,7,10,13,16,19-docosaheptaenoyl-CoA, suggesting that it does not constitute a rate limiting step in the peroxisomal degradation of docosahexaenoic acid. The polypeptide is Peroxisomal 2,4-dienoyl-CoA reductase [(3E)-enoyl-CoA-producing] (Decr2) (Rattus norvegicus (Rat)).